Consider the following 357-residue polypeptide: NAD-dependent protein deacetylase HST2 (357 aa).

S2 is subject to N-acetylserine. The region spanning 5-284 (TASTEMSVRK…EQLVEELGWQ (280 aa)) is the Deacetylase sirtuin-type domain. Residues 32 to 52 (GAGISTSCGIPDFRSPGTGLY) and 115 to 118 (QNID) each bind NAD(+). The active-site Proton acceptor is H135. Zn(2+) is bound by residues C143, C146, C170, and C173. NAD(+)-binding positions include 223 to 225 (GTS), 248 to 250 (NLE), and S270. Basic and acidic residues predominate over residues 317–329 (LDQSEHESADKKD). Residues 317 to 357 (LDQSEHESADKKDKKLQRLNGHDSDEDGASNSSSSQKAAKE) form a disordered region. A Phosphoserine modification is found at S340.

It belongs to the sirtuin family. Class I subfamily. In terms of assembly, homotrimer. Monomer. Homotrimeric in its unliganded state. Undergoes a trimer-monomer transition upon acetyl-lysine substrate binding. Requires Zn(2+) as cofactor.

Its subcellular location is the cytoplasm. It is found in the nucleus. The catalysed reaction is N(6)-acetyl-L-lysyl-[protein] + NAD(+) + H2O = 2''-O-acetyl-ADP-D-ribose + nicotinamide + L-lysyl-[protein]. Inhibited by ADP-ribose and nicotinamide. Functionally, NAD-dependent histone deacetylase that is involved in nuclear silencing events. Derepresses subtelomeric silencing and increases repression in nucleolar (rDNA) silencing. Its function is negatively regulated by active nuclear export. The protein is NAD-dependent protein deacetylase HST2 (HST2) of Saccharomyces cerevisiae (strain ATCC 204508 / S288c) (Baker's yeast).